The following is a 171-amino-acid chain: 3-hydroxydecanoyl-[acyl-carrier-protein] dehydratase (171 aa).

Histidine 70 is an active-site residue.

This sequence belongs to the thioester dehydratase family. FabA subfamily. As to quaternary structure, homodimer.

Its subcellular location is the cytoplasm. It catalyses the reaction a (3R)-hydroxyacyl-[ACP] = a (2E)-enoyl-[ACP] + H2O. The enzyme catalyses (3R)-hydroxydecanoyl-[ACP] = (2E)-decenoyl-[ACP] + H2O. The catalysed reaction is (2E)-decenoyl-[ACP] = (3Z)-decenoyl-[ACP]. Its pathway is lipid metabolism; fatty acid biosynthesis. Its function is as follows. Necessary for the introduction of cis unsaturation into fatty acids. Catalyzes the dehydration of (3R)-3-hydroxydecanoyl-ACP to E-(2)-decenoyl-ACP and then its isomerization to Z-(3)-decenoyl-ACP. Can catalyze the dehydratase reaction for beta-hydroxyacyl-ACPs with saturated chain lengths up to 16:0, being most active on intermediate chain length. The sequence is that of 3-hydroxydecanoyl-[acyl-carrier-protein] dehydratase from Vibrio campbellii (strain ATCC BAA-1116).